A 439-amino-acid polypeptide reads, in one-letter code: Ribosomal protein uS12 methylthiotransferase RimO (439 aa).

The MTTase N-terminal domain occupies 3 to 113 (HKVGFVSLGC…VVNAVHQHLP (111 aa)). Residues Cys-12, Cys-48, Cys-77, Cys-144, Cys-148, and Cys-151 each contribute to the [4Fe-4S] cluster site. The Radical SAM core domain occupies 130–367 (LTPRHYAYLK…MQVQAEISRN (238 aa)). Residues 370–436 (KNKIGSTQTV…DYDLYGDLEY (67 aa)) enclose the TRAM domain.

It belongs to the methylthiotransferase family. RimO subfamily. It depends on [4Fe-4S] cluster as a cofactor.

Its subcellular location is the cytoplasm. The enzyme catalyses L-aspartate(89)-[ribosomal protein uS12]-hydrogen + (sulfur carrier)-SH + AH2 + 2 S-adenosyl-L-methionine = 3-methylsulfanyl-L-aspartate(89)-[ribosomal protein uS12]-hydrogen + (sulfur carrier)-H + 5'-deoxyadenosine + L-methionine + A + S-adenosyl-L-homocysteine + 2 H(+). In terms of biological role, catalyzes the methylthiolation of an aspartic acid residue of ribosomal protein uS12. This chain is Ribosomal protein uS12 methylthiotransferase RimO, found in Legionella pneumophila (strain Paris).